A 446-amino-acid chain; its full sequence is D(3) dopamine receptor (446 aa).

The Extracellular portion of the chain corresponds to 1–32; that stretch reads MAPLSQISSHINSTCGAENSTGVNRARPHAYY. Residues N12 and N19 are each glycosylated (N-linked (GlcNAc...) asparagine). The helical transmembrane segment at 33–55 threads the bilayer; the sequence is ALSYCALILAIIFGNGLVCAAVL. The Cytoplasmic segment spans residues 56–65; sequence RERALQTTTN. Residues 66–88 form a helical membrane-spanning segment; that stretch reads YLVVSLAVADLLVATLVMPWVVY. The Extracellular segment spans residues 89-104; the sequence is LEVTGGVWNFSRICCD. N-linked (GlcNAc...) asparagine glycosylation is present at N97. A disulfide bridge links C103 with C181. The chain crosses the membrane as a helical span at residues 105-126; it reads VFVTLDVMMCTASILNLCAISI. The Cytoplasmic segment spans residues 127–149; sequence DRYTAVVMPVHYQHGTGQSSCRR. The helical transmembrane segment at 150 to 170 threads the bilayer; it reads VALMITAVWVLAFAVSCPLLF. Topologically, residues 171–187 are extracellular; the sequence is GFNTTGDPSICSISNPD. N-linked (GlcNAc...) asparagine glycosylation is present at N173. Residues 188–209 traverse the membrane as a helical segment; that stretch reads FVIYSSVVSFYVPFGVTVLVYA. Topologically, residues 210 to 375 are cytoplasmic; that stretch reads RIYMVLRQRR…VPLREKKATQ (166 aa). Residues 376-397 form a helical membrane-spanning segment; sequence MVVIVLGAFIVCWLPFFLTHVL. Residues 398–412 lie on the Extracellular side of the membrane; that stretch reads NTHCQACHVSPELYR. A disulfide bridge links C401 with C404. A helical transmembrane segment spans residues 413 to 432; that stretch reads ATTWLGYVNSALNPVIYTTF. Residues 433-446 lie on the Cytoplasmic side of the membrane; it reads NIEFRKAFLKILSC.

It belongs to the G-protein coupled receptor 1 family. In terms of assembly, interacts with CLIC6. Interacts with GRK4. Interacts with PALM. Interacts with FLNA (via filamin repeat 21); increases PKA-mediated phosphorylation of FLNA. Post-translationally, phosphorylated by GRK4. In terms of processing, palmitoylated.

It is found in the cell membrane. Dopamine receptor whose activity is mediated by G proteins which inhibit adenylyl cyclase. Promotes cell proliferation. The polypeptide is D(3) dopamine receptor (Drd3) (Mus musculus (Mouse)).